The primary structure comprises 223 residues: Small ribosomal subunit protein uS3 (223 aa).

One can recognise a KH type-2 domain in the interval 39–108; the sequence is IRNFVKKNSY…NILINIVEVK (70 aa).

It belongs to the universal ribosomal protein uS3 family. As to quaternary structure, part of the 30S ribosomal subunit. Forms a tight complex with proteins S10 and S14.

In terms of biological role, binds the lower part of the 30S subunit head. Binds mRNA in the 70S ribosome, positioning it for translation. This chain is Small ribosomal subunit protein uS3, found in Clostridium botulinum (strain Okra / Type B1).